The primary structure comprises 104 residues: Urease subunit beta (104 aa).

The protein belongs to the urease beta subunit family. As to quaternary structure, heterotrimer of UreA (gamma), UreB (beta) and UreC (alpha) subunits. Three heterotrimers associate to form the active enzyme.

Its subcellular location is the cytoplasm. It carries out the reaction urea + 2 H2O + H(+) = hydrogencarbonate + 2 NH4(+). It functions in the pathway nitrogen metabolism; urea degradation; CO(2) and NH(3) from urea (urease route): step 1/1. In Mycobacterium bovis (strain BCG / Pasteur 1173P2), this protein is Urease subunit beta.